Consider the following 408-residue polypeptide: Neutral cholesterol ester hydrolase 1 (408 aa).

Over 1–4 (MRSS) the chain is Cytoplasmic. The helical; Signal-anchor for type II membrane protein transmembrane segment at 5–25 (CVLLTALVALAAYYVYIPLPG) threads the bilayer. At 26–408 (SVSDPWKLML…SYIKWLDQNL (383 aa)) the chain is on the lumenal side. The Involved in the stabilization of the negatively charged intermediate by the formation of the oxyanion hole motif lies at 113 to 115 (HGG). The active site involves serine 191. N-linked (GlcNAc...) asparagine glycans are attached at residues asparagine 270 and asparagine 287. Catalysis depends on residues aspartate 348 and histidine 378. Asparagine 389 carries an N-linked (GlcNAc...) asparagine glycan.

This sequence belongs to the 'GDXG' lipolytic enzyme family. In terms of processing, N-glycosylated.

It localises to the cell membrane. It is found in the microsome. It catalyses the reaction a 1-O-alkyl-2-acetyl-sn-glycerol + H2O = a 1-O-alkyl-sn-glycerol + acetate + H(+). The enzyme catalyses 1-O-hexadecyl-2-acetyl-sn-glycerol + H2O = 1-O-hexadecyl-sn-glycerol + acetate + H(+). The catalysed reaction is a cholesterol ester + H2O = cholesterol + a fatty acid + H(+). It carries out the reaction cholesteryl (9Z-octadecenoate) + H2O = cholesterol + (9Z)-octadecenoate + H(+). In terms of biological role, hydrolyzes 2-acetyl monoalkylglycerol ether (1-O-alkyl-2-acetyl-sn-glycerol), the penultimate precursor of the pathway for de novo synthesis of platelet-activating factor. May be responsible for the hydrolysis of cholesterol esters (such as cholesteryl (9Z-octadecenoate)) in macrophages. Also involved in organ detoxification by hydrolyzing exogenous organophosphorus compounds. In Pongo abelii (Sumatran orangutan), this protein is Neutral cholesterol ester hydrolase 1 (NCEH1).